Reading from the N-terminus, the 293-residue chain is Pyridoxal 5'-phosphate synthase subunit PdxS (293 aa).

Asp23 contributes to the D-ribose 5-phosphate binding site. The active-site Schiff-base intermediate with D-ribose 5-phosphate is the Lys80. Gly152 provides a ligand contact to D-ribose 5-phosphate. Position 164 (Arg164) interacts with D-glyceraldehyde 3-phosphate. D-ribose 5-phosphate is bound by residues Gly213 and 234–235 (GS).

Belongs to the PdxS/SNZ family. In the presence of PdxT, forms a dodecamer of heterodimers.

It carries out the reaction aldehydo-D-ribose 5-phosphate + D-glyceraldehyde 3-phosphate + L-glutamine = pyridoxal 5'-phosphate + L-glutamate + phosphate + 3 H2O + H(+). It functions in the pathway cofactor biosynthesis; pyridoxal 5'-phosphate biosynthesis. Its function is as follows. Catalyzes the formation of pyridoxal 5'-phosphate from ribose 5-phosphate (RBP), glyceraldehyde 3-phosphate (G3P) and ammonia. The ammonia is provided by the PdxT subunit. Can also use ribulose 5-phosphate and dihydroxyacetone phosphate as substrates, resulting from enzyme-catalyzed isomerization of RBP and G3P, respectively. In Chloroflexus aggregans (strain MD-66 / DSM 9485), this protein is Pyridoxal 5'-phosphate synthase subunit PdxS.